A 308-amino-acid polypeptide reads, in one-letter code: MARAMDNAILETILQRVRPLIGQGKVADYIPALASVEGSKLGIAICTVDGQHYQAGDAHERFSIQSISKVLSLVVAMRHYPEEEIWQRVGKDPSGSPFNSLVQLEMEQGIPRNPFINAGALVVCDMLQGRLSAPRQRMLEVVRALCGVSDITYDATVARSEFEHSARNAAIAWLMKSFGNFHHDVPTVLQNYFHYCALKMSCMELARTFVFLANQGEAFHLDEPVVTPMQARQINALMATNGMYQNAGEFAWRVGLPAKSGVGGGIVAIVPHEMAIAVWSPELDPAGNSLAGIAALEQLTQTLGRSVY.

Positions 66, 117, 161, 168, 192, 244, and 262 each coordinate substrate.

It belongs to the glutaminase family. Homotetramer.

The catalysed reaction is L-glutamine + H2O = L-glutamate + NH4(+). This is Glutaminase from Salmonella arizonae (strain ATCC BAA-731 / CDC346-86 / RSK2980).